Reading from the N-terminus, the 691-residue chain is DNA ligase (691 aa).

NAD(+) contacts are provided by residues aspartate 41–aspartate 45, serine 90–leucine 91, and glutamate 130. Lysine 132 serves as the catalytic N6-AMP-lysine intermediate. Residues arginine 153, glutamate 190, lysine 307, and lysine 331 each contribute to the NAD(+) site. Residues cysteine 425, cysteine 428, cysteine 443, and cysteine 449 each contribute to the Zn(2+) site. The region spanning alanine 610 to arginine 691 is the BRCT domain.

Belongs to the NAD-dependent DNA ligase family. LigA subfamily. Requires Mg(2+) as cofactor. Mn(2+) serves as cofactor.

The catalysed reaction is NAD(+) + (deoxyribonucleotide)n-3'-hydroxyl + 5'-phospho-(deoxyribonucleotide)m = (deoxyribonucleotide)n+m + AMP + beta-nicotinamide D-nucleotide.. Functionally, DNA ligase that catalyzes the formation of phosphodiester linkages between 5'-phosphoryl and 3'-hydroxyl groups in double-stranded DNA using NAD as a coenzyme and as the energy source for the reaction. It is essential for DNA replication and repair of damaged DNA. This Burkholderia thailandensis (strain ATCC 700388 / DSM 13276 / CCUG 48851 / CIP 106301 / E264) protein is DNA ligase.